The following is a 177-amino-acid chain: Large ribosomal subunit protein uL6 (177 aa).

This sequence belongs to the universal ribosomal protein uL6 family. In terms of assembly, part of the 50S ribosomal subunit.

In terms of biological role, this protein binds to the 23S rRNA, and is important in its secondary structure. It is located near the subunit interface in the base of the L7/L12 stalk, and near the tRNA binding site of the peptidyltransferase center. This Paramagnetospirillum magneticum (strain ATCC 700264 / AMB-1) (Magnetospirillum magneticum) protein is Large ribosomal subunit protein uL6.